Reading from the N-terminus, the 893-residue chain is DNA mismatch repair protein MutS (893 aa).

637-644 (GPNMGGKS) provides a ligand contact to ATP.

It belongs to the DNA mismatch repair MutS family.

Functionally, this protein is involved in the repair of mismatches in DNA. It is possible that it carries out the mismatch recognition step. This protein has a weak ATPase activity. The sequence is that of DNA mismatch repair protein MutS from Burkholderia thailandensis (strain ATCC 700388 / DSM 13276 / CCUG 48851 / CIP 106301 / E264).